A 145-amino-acid polypeptide reads, in one-letter code: MAIVIVAFVVFLDQFTKYLAAKYLMPIGSYPVIKHFFHLTYVENRGAAFGMLQNKTLFFIVITVVVGIVLIYSMIKLPENSLYNYTLAMILGGAIGNLIDRVRLGYVVDFIDFKFFPAVFNVADSFIVVGAIILGYLMIFKGGIR.

2 helical membrane-spanning segments follow: residues 57–77 and 79–99; these read LFFIVITVVVGIVLIYSMIKL and ENSLYNYTLAMILGGAIGNLI. Active-site residues include D109 and D124. A helical transmembrane segment spans residues 120-140; sequence FNVADSFIVVGAIILGYLMIF.

The protein belongs to the peptidase A8 family.

It is found in the cell membrane. The enzyme catalyses Release of signal peptides from bacterial membrane prolipoproteins. Hydrolyzes -Xaa-Yaa-Zaa-|-(S,diacylglyceryl)Cys-, in which Xaa is hydrophobic (preferably Leu), and Yaa (Ala or Ser) and Zaa (Gly or Ala) have small, neutral side chains.. It functions in the pathway protein modification; lipoprotein biosynthesis (signal peptide cleavage). Functionally, this protein specifically catalyzes the removal of signal peptides from prolipoproteins. In Caldanaerobacter subterraneus subsp. tengcongensis (strain DSM 15242 / JCM 11007 / NBRC 100824 / MB4) (Thermoanaerobacter tengcongensis), this protein is Lipoprotein signal peptidase.